Here is a 229-residue protein sequence, read N- to C-terminus: Large ribosomal subunit protein uL1 (229 aa).

Belongs to the universal ribosomal protein uL1 family. As to quaternary structure, part of the 50S ribosomal subunit.

Functionally, binds directly to 23S rRNA. The L1 stalk is quite mobile in the ribosome, and is involved in E site tRNA release. Its function is as follows. Protein L1 is also a translational repressor protein, it controls the translation of the L11 operon by binding to its mRNA. The sequence is that of Large ribosomal subunit protein uL1 from Phytoplasma australiense.